Here is a 130-residue protein sequence, read N- to C-terminus: MAATQYYGTGRRKTSTARVFAKVGTGNIIVNKLPLDEYFGRETSRMVVRQPLELVEMTDKLDIMVTVKGGGNTGQAGAIRHGITRALMELDESLRPSLRAAGFVTRDARKVERKKVGLRKARRKPQFSKR.

The protein belongs to the universal ribosomal protein uS9 family.

This chain is Small ribosomal subunit protein uS9, found in Shewanella halifaxensis (strain HAW-EB4).